Consider the following 482-residue polypeptide: Arginine/ornithine antiporter (482 aa).

Over 1 to 10 the chain is Cytoplasmic; sequence MSQESSQKLR. A helical transmembrane segment spans residues 11–31; that stretch reads LGALTALVVGSMIGGGIFSLP. Residues 32–40 are Periplasmic-facing; the sequence is QNMAASADV. Residues 41 to 61 traverse the membrane as a helical segment; the sequence is GAVLIGWAITAVGMLTLAFVF. Residues 62–100 are Cytoplasmic-facing; sequence QTLANRKPELDGGVYAYAKAGFGDYMGFSSAWGYWISAW. A helical transmembrane segment spans residues 101–121; that stretch reads LGNVGYFVLLFSTLGYFFPIF. The Periplasmic portion of the chain corresponds to 122–124; that stretch reads GKG. Residues 125 to 145 traverse the membrane as a helical segment; the sequence is DTVAAIVCASVLLWALHFLVL. Residues 146-156 are Cytoplasmic-facing; sequence RGIKEAAFINT. The chain crosses the membrane as a helical span at residues 157–177; the sequence is VTTVAKVVPLFLFILICLFAF. Residues 178–202 lie on the Periplasmic side of the membrane; that stretch reads KLDIFTADIWGKSNPDLGSVMNQVR. Residues 203–223 traverse the membrane as a helical segment; sequence NMMLVTVWVFIGIEGASIFSS. Topologically, residues 224–235 are cytoplasmic; sequence RAEKRSDVGKAT. A helical transmembrane segment spans residues 236 to 256; that stretch reads VIGFITVLLLLVLVNVLSMGV. At 257–283 the chain is on the periplasmic side; sequence MTQPELAKLQNPSMALVLEHVVGHWGA. A helical membrane pass occupies residues 284 to 304; it reads VLISVGLLISLLGALLSWVLL. Over 305–333 the chain is Cytoplasmic; it reads CAEIMFAAAKDHTMPEFLRRENANQVPAN. Residues 334-354 traverse the membrane as a helical segment; the sequence is ALWLTNICVQVFLVVVFFTSG. The Periplasmic portion of the chain corresponds to 355–365; it reads DPDGMDPYTKM. The helical transmembrane segment at 366–386 threads the bilayer; it reads LLLATSMILIPYFWSAAYGLL. Topologically, residues 387-403 are cytoplasmic; that stretch reads LTLKGETYENDARERSK. A helical transmembrane segment spans residues 404 to 424; it reads DLVIAGIAVAYAVWLLYAGGL. Lys-425 is a topological domain (periplasmic). The chain crosses the membrane as a helical span at residues 426–446; that stretch reads YLLLSALLYAPGAILFAKAKH. At 447 to 458 the chain is on the cytoplasmic side; sequence EVGQPIFTGIEK. A helical membrane pass occupies residues 459–479; sequence LIFAAVVIGALVAAYGLYDGF. At 480-482 the chain is on the periplasmic side; sequence LTL.

It belongs to the amino acid-polyamine-organocation (APC) superfamily. Basic amino acid/polyamine antiporter (APA) (TC 2.A.3.2) family.

Its subcellular location is the cell inner membrane. It catalyses the reaction L-ornithine(in) + L-arginine(out) = L-ornithine(out) + L-arginine(in). In terms of biological role, catalyzes electroneutral exchange between arginine and ornithine to allow high-efficiency energy conversion in the arginine deiminase pathway. Also mediates the proton motive force-driven uptake of arginine and ornithine, but the exchange is several orders of magnitude faster than the proton motive force-driven transport. This chain is Arginine/ornithine antiporter, found in Pseudomonas aeruginosa (strain ATCC 15692 / DSM 22644 / CIP 104116 / JCM 14847 / LMG 12228 / 1C / PRS 101 / PAO1).